The primary structure comprises 367 residues: 4-hydroxy-3-methylbut-2-en-1-yl diphosphate synthase (flavodoxin) (367 aa).

[4Fe-4S] cluster contacts are provided by cysteine 268, cysteine 271, cysteine 303, and glutamate 310.

Belongs to the IspG family. The cofactor is [4Fe-4S] cluster.

It carries out the reaction (2E)-4-hydroxy-3-methylbut-2-enyl diphosphate + oxidized [flavodoxin] + H2O + 2 H(+) = 2-C-methyl-D-erythritol 2,4-cyclic diphosphate + reduced [flavodoxin]. It participates in isoprenoid biosynthesis; isopentenyl diphosphate biosynthesis via DXP pathway; isopentenyl diphosphate from 1-deoxy-D-xylulose 5-phosphate: step 5/6. Converts 2C-methyl-D-erythritol 2,4-cyclodiphosphate (ME-2,4cPP) into 1-hydroxy-2-methyl-2-(E)-butenyl 4-diphosphate. The protein is 4-hydroxy-3-methylbut-2-en-1-yl diphosphate synthase (flavodoxin) of Shouchella clausii (strain KSM-K16) (Alkalihalobacillus clausii).